Consider the following 194-residue polypeptide: Imidazoleglycerol-phosphate dehydratase (194 aa).

This sequence belongs to the imidazoleglycerol-phosphate dehydratase family.

The protein resides in the cytoplasm. The enzyme catalyses D-erythro-1-(imidazol-4-yl)glycerol 3-phosphate = 3-(imidazol-4-yl)-2-oxopropyl phosphate + H2O. Its pathway is amino-acid biosynthesis; L-histidine biosynthesis; L-histidine from 5-phospho-alpha-D-ribose 1-diphosphate: step 6/9. In Thermus thermophilus (strain ATCC 27634 / DSM 579 / HB8), this protein is Imidazoleglycerol-phosphate dehydratase.